A 267-amino-acid polypeptide reads, in one-letter code: Phosphatidylglycerol--prolipoprotein diacylglyceryl transferase (267 aa).

Transmembrane regions (helical) follow at residues leucine 18–alanine 38, phenylalanine 57–tyrosine 77, and glycine 95–tryptophan 115. Arginine 140 contacts a 1,2-diacyl-sn-glycero-3-phospho-(1'-sn-glycerol). The next 3 helical transmembrane spans lie at serine 173–isoleucine 193, glycine 200–phenylalanine 220, and phenylalanine 233–isoleucine 253.

This sequence belongs to the Lgt family.

Its subcellular location is the cell inner membrane. The enzyme catalyses L-cysteinyl-[prolipoprotein] + a 1,2-diacyl-sn-glycero-3-phospho-(1'-sn-glycerol) = an S-1,2-diacyl-sn-glyceryl-L-cysteinyl-[prolipoprotein] + sn-glycerol 1-phosphate + H(+). It participates in protein modification; lipoprotein biosynthesis (diacylglyceryl transfer). Functionally, catalyzes the transfer of the diacylglyceryl group from phosphatidylglycerol to the sulfhydryl group of the N-terminal cysteine of a prolipoprotein, the first step in the formation of mature lipoproteins. The protein is Phosphatidylglycerol--prolipoprotein diacylglyceryl transferase of Pseudoalteromonas translucida (strain TAC 125).